A 163-amino-acid chain; its full sequence is Bacterial ISG15-like ubiquitin-like protein BilA (163 aa).

Ubiquitin-like BIL-type domains follow at residues 4-80 (LVVF…RCKR) and 81-163 (IRAT…RIEG). Residue glycine 163 forms a Glycyl lysine isopeptide (Gly-Lys) (interchain with K-? in central tail fiber acceptor protein) linkage.

In terms of biological role, component of the Bil (bacterial ISG15-like) antiviral defense system, composed of BilA, BilB, BilC and BilD. The Bil system specifically conjugates a ubiquitin-like moiety (bilA) to the bacteriophage central tail fiber (CTF, or tip attachment protein J) via reactions involving E1 (bilD) and E2 (bilB). Modifies CTF of phage SECphi27 and SECphi4, which probably interferes with assembly of the phage tail. Also modifies T5 baseplate hub protein pb3 (gene D16), but not gp27 of phage T6 (Bil defends against T6). Bil-encoding bacteria produce mostly defective phage SECphi27, many of which have phage assembly defects, including no tails. SECphi27 phage progeny produced in E.coli with the Bil system inject less DNA into naive host cells, maybe because the phage are less able to adsorb and inject their DNA into host cells. Its function is as follows. Expression of the Bil system in E.coli (strain MG1655) confers about 100-fold resistance to phage SECphi27, SECphi18, SECphi6, SECphi4 and T5, but not to SECphi17. When cells expressing the Bil system are infected by phage SECphi27 at low multiplicity of infection (0.03 MOI) the culture survives, at 3.0 MOI the culture collapses at the same time as cells without the Bil system. The protein is Bacterial ISG15-like ubiquitin-like protein BilA of Collimonas sp. (strain OK412).